The chain runs to 288 residues: Shikimate dehydrogenase (NADP(+)) (288 aa).

Residues 21–23 (SLS) and T68 contribute to the shikimate site. K72 (proton acceptor) is an active-site residue. Shikimate is bound by residues N93 and D108. NADP(+) is bound by residues 132 to 136 (GNGGA) and L230. Residue Y232 participates in shikimate binding. G253 provides a ligand contact to NADP(+).

The protein belongs to the shikimate dehydrogenase family. In terms of assembly, homodimer.

The catalysed reaction is shikimate + NADP(+) = 3-dehydroshikimate + NADPH + H(+). The protein operates within metabolic intermediate biosynthesis; chorismate biosynthesis; chorismate from D-erythrose 4-phosphate and phosphoenolpyruvate: step 4/7. Its function is as follows. Involved in the biosynthesis of the chorismate, which leads to the biosynthesis of aromatic amino acids. Catalyzes the reversible NADPH linked reduction of 3-dehydroshikimate (DHSA) to yield shikimate (SA). This is Shikimate dehydrogenase (NADP(+)) from Crocosphaera subtropica (strain ATCC 51142 / BH68) (Cyanothece sp. (strain ATCC 51142)).